Reading from the N-terminus, the 344-residue chain is Histone-lysine N-methyltransferase, H3 lysine-9 specific KMT1 (344 aa).

Residues 79–174 enclose the Pre-SET domain; the sequence is SGCSCAKDSE…DCPNRVVERG (96 aa). The Zn(2+) site is built by Cys81, Cys83, Cys89, Cys94, Cys96, Cys156, Cys160, Cys162, Cys166, and Cys272. The SET domain maps to 177–312; the sequence is IPLEIFRTPD…EGEELTFDYV (136 aa). Tyr311 contacts S-adenosyl-L-methionine. The Post-SET domain maps to 328–344; that stretch reads HMTRCLCGSKKCRKFLW. 3 residues coordinate Zn(2+): Cys332, Cys334, and Cys339.

The protein belongs to the class V-like SAM-binding methyltransferase superfamily.

It localises to the chromosome. It catalyses the reaction L-lysyl(9)-[histone H3] + 3 S-adenosyl-L-methionine = N(6),N(6),N(6)-trimethyl-L-lysyl(9)-[histone H3] + 3 S-adenosyl-L-homocysteine + 3 H(+). In terms of biological role, histone methyltransferase that specifically trimethylates histone H3 to form H3K9me3. H3K9me3 marks chromatin regions for DNA methylation. Plays a key role in the regulation of the biosynthesis of the gamma-pyrones fusapyrone (FPY) and deoxyfusapyrone (dFPY). In Fusarium mangiferae (Mango malformation disease fungus), this protein is Histone-lysine N-methyltransferase, H3 lysine-9 specific KMT1.